Reading from the N-terminus, the 472-residue chain is Kynureninase 1 (472 aa).

Pyridoxal 5'-phosphate is bound by residues Leu146, Thr147, Phe174–Asp177, Ser231, Asp260, His263, and Tyr285. N6-(pyridoxal phosphate)lysine is present on Lys286. Trp326 and Asn354 together coordinate pyridoxal 5'-phosphate.

The protein belongs to the kynureninase family. In terms of assembly, homodimer. Requires pyridoxal 5'-phosphate as cofactor.

It is found in the cytoplasm. It carries out the reaction L-kynurenine + H2O = anthranilate + L-alanine + H(+). It catalyses the reaction 3-hydroxy-L-kynurenine + H2O = 3-hydroxyanthranilate + L-alanine + H(+). It functions in the pathway amino-acid degradation; L-kynurenine degradation; L-alanine and anthranilate from L-kynurenine: step 1/1. The protein operates within cofactor biosynthesis; NAD(+) biosynthesis; quinolinate from L-kynurenine: step 2/3. Catalyzes the cleavage of L-kynurenine (L-Kyn) and L-3-hydroxykynurenine (L-3OHKyn) into anthranilic acid (AA) and 3-hydroxyanthranilic acid (3-OHAA), respectively. In Aspergillus niger (strain ATCC MYA-4892 / CBS 513.88 / FGSC A1513), this protein is Kynureninase 1 (bna5-1).